Here is a 312-residue protein sequence, read N- to C-terminus: DNA-directed RNA polymerase subunit alpha (312 aa).

Positions 1-226 (MIEFEKPRIE…EHLDIFVNLT (226 aa)) are alpha N-terminal domain (alpha-NTD). The segment at 243-312 (KEKMLEMTIE…DLGLGLRKDD (70 aa)) is alpha C-terminal domain (alpha-CTD).

This sequence belongs to the RNA polymerase alpha chain family. Homodimer. The RNAP catalytic core consists of 2 alpha, 1 beta, 1 beta' and 1 omega subunit. When a sigma factor is associated with the core the holoenzyme is formed, which can initiate transcription.

It catalyses the reaction RNA(n) + a ribonucleoside 5'-triphosphate = RNA(n+1) + diphosphate. In terms of biological role, DNA-dependent RNA polymerase catalyzes the transcription of DNA into RNA using the four ribonucleoside triphosphates as substrates. The chain is DNA-directed RNA polymerase subunit alpha from Enterococcus faecalis (strain ATCC 700802 / V583).